We begin with the raw amino-acid sequence, 156 residues long: Low-salt glycan biosynthesis protein Agl8 (156 aa).

Residues 14–15 (RI) and arginine 47 contribute to the substrate site. Residues 25-156 (ANVPLVSVDL…YVERYLDALD (132 aa)) form the Nudix hydrolase domain. The Mg(2+) site is built by glycine 60, glutamate 80, and glutamine 130. The short motif at 61-82 (GTVFKNETLTDALYRVADEELG) is the Nudix box element.

It belongs to the Nudix hydrolase family. The cofactor is Mg(2+).

Its pathway is protein modification; protein glycosylation. It participates in cell surface structure biogenesis; S-layer biogenesis. Its function is as follows. Nudix hydrolase involved in N-glycan biosynthetic pathway that takes place under low-salt conditions (1.75 M instead of 3.4 M). Participates in the formation of the tetrasaccharide present at 'Asn-532' of S-layer glycoprotein Csg, consisting of a sulfated hexose, 2 hexoses and rhamnose. Mediates attachment of sugar 3 in the tetrasaccharide. The sequence is that of Low-salt glycan biosynthesis protein Agl8 (agl8) from Haloferax volcanii (strain ATCC 29605 / DSM 3757 / JCM 8879 / NBRC 14742 / NCIMB 2012 / VKM B-1768 / DS2) (Halobacterium volcanii).